A 209-amino-acid polypeptide reads, in one-letter code: Ribosome maturation factor RimM (209 aa).

Positions 1-28 (MARRPQRPAPSGRAGAGRGAAGAAPPGP) are disordered. A PRC barrel domain is found at 123-197 (EDEFFTADLV…RVTIAPPEDL (75 aa)).

This sequence belongs to the RimM family. As to quaternary structure, binds ribosomal protein uS19.

The protein resides in the cytoplasm. Functionally, an accessory protein needed during the final step in the assembly of 30S ribosomal subunit, possibly for assembly of the head region. Essential for efficient processing of 16S rRNA. May be needed both before and after RbfA during the maturation of 16S rRNA. It has affinity for free ribosomal 30S subunits but not for 70S ribosomes. This is Ribosome maturation factor RimM from Methylobacterium sp. (strain 4-46).